The following is a 432-amino-acid chain: MQVSVETTQGLGRRVTITIAADSIETAVKSELVNVAKKVRIDGFRKGKVPMNIVAQRYGASVRQDVLGDLMSRNFVDAIIKEKINPAGAPNYVPGEYKVGEDFTYSVEFEVYPEVELTGLESIEVEKPVVEVTDADVDVMLDTLRKQQATWKEKDGAADAEDRVTLDFTGTVDGEEFEGGKATDFVLAMGQGRMIPGFEDGVKGHKVGEEFTIDVTFPEEYHAENLKGKAAKFAINLKKVEERELPELTEEFIKRFGVEDGSVAGLRAEVRKNMERELKGAVRNRVKSQAIEGLVKANDIDVPSALIDSEIDVLRRQAAQRFGGNEKQALELPRELFEEQAKRRVVVGLLLGEVIRTNELKADEVRVKGLIEEMASAYEDPKEVIEFYSKNKELMDNMRNVALEEQAIEAVLAKAKVSEKATSFNELMNQQA.

The 86-residue stretch at 161–246 folds into the PPIase FKBP-type domain; the sequence is EDRVTLDFTG…LKKVEERELP (86 aa).

Belongs to the FKBP-type PPIase family. Tig subfamily.

It is found in the cytoplasm. The catalysed reaction is [protein]-peptidylproline (omega=180) = [protein]-peptidylproline (omega=0). Functionally, involved in protein export. Acts as a chaperone by maintaining the newly synthesized protein in an open conformation. Functions as a peptidyl-prolyl cis-trans isomerase. This chain is Trigger factor, found in Salmonella arizonae (strain ATCC BAA-731 / CDC346-86 / RSK2980).